We begin with the raw amino-acid sequence, 831 residues long: Translation initiation factor IF-2 (831 aa).

The tr-type G domain occupies 329–499; the sequence is TRAPVVTVMG…LLISEMQDLK (171 aa). Residues 338–345 are G1; it reads GHVDHGKT. Position 338–345 (338–345) interacts with GTP; the sequence is GHVDHGKT. A G2 region spans residues 363–367; sequence GITQH. Residues 385-388 are G3; that stretch reads DTPG. Residues 385–389 and 439–442 contribute to the GTP site; these read DTPGH and NKID. The interval 439–442 is G4; sequence NKID. A G5 region spans residues 475 to 477; sequence SAL.

The protein belongs to the TRAFAC class translation factor GTPase superfamily. Classic translation factor GTPase family. IF-2 subfamily.

It is found in the cytoplasm. In terms of biological role, one of the essential components for the initiation of protein synthesis. Protects formylmethionyl-tRNA from spontaneous hydrolysis and promotes its binding to the 30S ribosomal subunits. Also involved in the hydrolysis of GTP during the formation of the 70S ribosomal complex. The sequence is that of Translation initiation factor IF-2 from Rickettsia typhi (strain ATCC VR-144 / Wilmington).